Consider the following 375-residue polypeptide: Growth/differentiation factor 8 (375 aa).

The N-terminal stretch at 1–18 is a signal peptide; sequence MQKLQISVYIYLFMLIVA. Positions 19–266 are excised as a propeptide; the sequence is GPVDLNENSE…VTDTPKRSRR (248 aa). N-linked (GlcNAc...) asparagine glycans are attached at residues Asn-47 and Asn-71. Intrachain disulfides connect Cys-272/Cys-282, Cys-281/Cys-340, Cys-309/Cys-372, and Cys-313/Cys-374.

The protein belongs to the TGF-beta family. In terms of assembly, homodimer; disulfide-linked. Interacts with WFIKKN2, leading to inhibit its activity. Interacts with FSTL3. In terms of processing, synthesized as large precursor molecule that undergoes proteolytic cleavage to generate an N-terminal propeptide and a disulfide linked C-terminal dimer, which is the biologically active molecule. The circulating form consists of a latent complex of the C-terminal dimer and other proteins, including its propeptide, which maintain the C-terminal dimer in a latent, inactive state. Ligand activation requires additional cleavage of the prodomain by a tolloid-like metalloproteinase.

The protein localises to the secreted. In terms of biological role, acts specifically as a negative regulator of skeletal muscle growth. The protein is Growth/differentiation factor 8 (MSTN) of Bubalus bubalis (Domestic water buffalo).